We begin with the raw amino-acid sequence, 388 residues long: tRNA (guanine-N(7)-)-methyltransferase non-catalytic subunit (388 aa).

4 WD repeats span residues 58-102 (VEKR…KGDI), 112-151 (VVPK…AIEM), 153-194 (GAIS…DSFF), and 196-234 (GHTE…APRR). Residues 365–388 (EKKKRRLNEDINGDDGEGPGPSNS) form a disordered region.

Belongs to the WD repeat TRM82 family. In terms of assembly, forms a heterodimer with the catalytic subunit.

The protein localises to the nucleus. The protein operates within tRNA modification; N(7)-methylguanine-tRNA biosynthesis. Its function is as follows. Required for the formation of N(7)-methylguanine at position 46 (m7G46) in tRNA. In the complex, it is required to stabilize and induce conformational changes of the catalytic subunit. The sequence is that of tRNA (guanine-N(7)-)-methyltransferase non-catalytic subunit from Caenorhabditis elegans.